We begin with the raw amino-acid sequence, 62 residues long: uncharacterized protein (62 aa).

The segment covering M1–T18 has biased composition (polar residues). A disordered region spans residues M1–A24.

This is an uncharacterized protein from Rickettsia conorii (strain ATCC VR-613 / Malish 7).